Reading from the N-terminus, the 299-residue chain is tRNA dimethylallyltransferase (299 aa).

Residue 10-17 (GATATGKS) participates in ATP binding. 12–17 (TATGKS) contributes to the substrate binding site. Residues 35-38 (DSRQ) form an interaction with substrate tRNA region.

The protein belongs to the IPP transferase family. In terms of assembly, monomer. Mg(2+) is required as a cofactor.

The catalysed reaction is adenosine(37) in tRNA + dimethylallyl diphosphate = N(6)-dimethylallyladenosine(37) in tRNA + diphosphate. Catalyzes the transfer of a dimethylallyl group onto the adenine at position 37 in tRNAs that read codons beginning with uridine, leading to the formation of N6-(dimethylallyl)adenosine (i(6)A). This chain is tRNA dimethylallyltransferase, found in Rippkaea orientalis (strain PCC 8801 / RF-1) (Cyanothece sp. (strain PCC 8801)).